The sequence spans 95 residues: UPF0213 protein YPA_2977 (95 aa).

The GIY-YIG domain occupies 4-79; it reads SLWHLYLLRT…KQLSKQQKEK (76 aa).

The protein belongs to the UPF0213 family.

In Yersinia pestis bv. Antiqua (strain Antiqua), this protein is UPF0213 protein YPA_2977.